The primary structure comprises 473 residues: Bifunctional protein HldE (473 aa).

The segment at 1–316 (MILPDFSLAR…AIAIHGQRAP (316 aa)) is ribokinase. 193 to 196 (NLSE) is an ATP binding site. Residue Asp262 is part of the active site. The cytidylyltransferase stretch occupies residues 342 to 473 (VTNGCFDLLH…TRIIEAIRNG (132 aa)).

It in the N-terminal section; belongs to the carbohydrate kinase PfkB family. In the C-terminal section; belongs to the cytidylyltransferase family. As to quaternary structure, homodimer.

The catalysed reaction is D-glycero-beta-D-manno-heptose 7-phosphate + ATP = D-glycero-beta-D-manno-heptose 1,7-bisphosphate + ADP + H(+). It carries out the reaction D-glycero-beta-D-manno-heptose 1-phosphate + ATP + H(+) = ADP-D-glycero-beta-D-manno-heptose + diphosphate. The protein operates within nucleotide-sugar biosynthesis; ADP-L-glycero-beta-D-manno-heptose biosynthesis; ADP-L-glycero-beta-D-manno-heptose from D-glycero-beta-D-manno-heptose 7-phosphate: step 1/4. It functions in the pathway nucleotide-sugar biosynthesis; ADP-L-glycero-beta-D-manno-heptose biosynthesis; ADP-L-glycero-beta-D-manno-heptose from D-glycero-beta-D-manno-heptose 7-phosphate: step 3/4. Catalyzes the phosphorylation of D-glycero-D-manno-heptose 7-phosphate at the C-1 position to selectively form D-glycero-beta-D-manno-heptose-1,7-bisphosphate. Functionally, catalyzes the ADP transfer from ATP to D-glycero-beta-D-manno-heptose 1-phosphate, yielding ADP-D-glycero-beta-D-manno-heptose. The chain is Bifunctional protein HldE from Methylococcus capsulatus (strain ATCC 33009 / NCIMB 11132 / Bath).